A 199-amino-acid polypeptide reads, in one-letter code: MMQHLRPALVMTAALCLITGIIYPGLITGAAQLLFPAQANGSLIERDGRVVGSALIGQRFTTPNYFHGRPSAAGADGYDAMASGGSNKGPTDSTLAARIAERVDSVVVDGGVRGRIPADLVTASGSGLDPDISPASAALQVARVAQARELPAATVTLLVAQHTTPRQLGVLGEPRVNVLRLNLALDSLSATSPSVRSVR.

Residues 7 to 27 (PALVMTAALCLITGIIYPGLI) traverse the membrane as a helical segment.

This sequence belongs to the KdpC family. In terms of assembly, the system is composed of three essential subunits: KdpA, KdpB and KdpC.

The protein resides in the cell inner membrane. Functionally, part of the high-affinity ATP-driven potassium transport (or Kdp) system, which catalyzes the hydrolysis of ATP coupled with the electrogenic transport of potassium into the cytoplasm. This subunit acts as a catalytic chaperone that increases the ATP-binding affinity of the ATP-hydrolyzing subunit KdpB by the formation of a transient KdpB/KdpC/ATP ternary complex. The sequence is that of Potassium-transporting ATPase KdpC subunit from Gemmatimonas aurantiaca (strain DSM 14586 / JCM 11422 / NBRC 100505 / T-27).